Consider the following 612-residue polypeptide: Dihydroxy-acid dehydratase (612 aa).

Asp81 is a binding site for Mg(2+). Residue Cys122 coordinates [2Fe-2S] cluster. The Mg(2+) site is built by Asp123 and Lys124. Lys124 is modified (N6-carboxylysine). Residue Cys196 participates in [2Fe-2S] cluster binding. Mg(2+) is bound at residue Glu492. Ser518 acts as the Proton acceptor in catalysis.

It belongs to the IlvD/Edd family. As to quaternary structure, homodimer. The cofactor is [2Fe-2S] cluster. It depends on Mg(2+) as a cofactor.

The enzyme catalyses (2R)-2,3-dihydroxy-3-methylbutanoate = 3-methyl-2-oxobutanoate + H2O. The catalysed reaction is (2R,3R)-2,3-dihydroxy-3-methylpentanoate = (S)-3-methyl-2-oxopentanoate + H2O. Its pathway is amino-acid biosynthesis; L-isoleucine biosynthesis; L-isoleucine from 2-oxobutanoate: step 3/4. It participates in amino-acid biosynthesis; L-valine biosynthesis; L-valine from pyruvate: step 3/4. Functionally, functions in the biosynthesis of branched-chain amino acids. Catalyzes the dehydration of (2R,3R)-2,3-dihydroxy-3-methylpentanoate (2,3-dihydroxy-3-methylvalerate) into 2-oxo-3-methylpentanoate (2-oxo-3-methylvalerate) and of (2R)-2,3-dihydroxy-3-methylbutanoate (2,3-dihydroxyisovalerate) into 2-oxo-3-methylbutanoate (2-oxoisovalerate), the penultimate precursor to L-isoleucine and L-valine, respectively. The protein is Dihydroxy-acid dehydratase of Cereibacter sphaeroides (strain ATCC 17029 / ATH 2.4.9) (Rhodobacter sphaeroides).